The primary structure comprises 423 residues: Gamma-glutamyl phosphate reductase (423 aa).

It belongs to the gamma-glutamyl phosphate reductase family.

Its subcellular location is the cytoplasm. The catalysed reaction is L-glutamate 5-semialdehyde + phosphate + NADP(+) = L-glutamyl 5-phosphate + NADPH + H(+). Its pathway is amino-acid biosynthesis; L-proline biosynthesis; L-glutamate 5-semialdehyde from L-glutamate: step 2/2. Its function is as follows. Catalyzes the NADPH-dependent reduction of L-glutamate 5-phosphate into L-glutamate 5-semialdehyde and phosphate. The product spontaneously undergoes cyclization to form 1-pyrroline-5-carboxylate. The chain is Gamma-glutamyl phosphate reductase from Burkholderia orbicola (strain MC0-3).